The following is a 311-amino-acid chain: 1D-myo-inositol 2-acetamido-2-deoxy-alpha-D-glucopyranoside deacetylase (311 aa).

Residues His29, Asp32, and His162 each contribute to the Zn(2+) site.

It belongs to the MshB deacetylase family. Requires Zn(2+) as cofactor.

The catalysed reaction is 1D-myo-inositol 2-acetamido-2-deoxy-alpha-D-glucopyranoside + H2O = 1D-myo-inositol 2-amino-2-deoxy-alpha-D-glucopyranoside + acetate. Functionally, catalyzes the deacetylation of 1D-myo-inositol 2-acetamido-2-deoxy-alpha-D-glucopyranoside (GlcNAc-Ins) in the mycothiol biosynthesis pathway. The sequence is that of 1D-myo-inositol 2-acetamido-2-deoxy-alpha-D-glucopyranoside deacetylase from Corynebacterium efficiens (strain DSM 44549 / YS-314 / AJ 12310 / JCM 11189 / NBRC 100395).